The following is a 398-amino-acid chain: Histidinol dehydrogenase (398 aa).

Residues Tyr114, Gln176, and Asn199 each contribute to the NAD(+) site. Substrate contacts are provided by Thr222, Gln244, and His247. The Zn(2+) site is built by Gln244 and His247. Catalysis depends on proton acceptor residues Glu298 and His299. Substrate is bound by residues His299, Asp331, Glu384, and His389. Asp331 provides a ligand contact to Zn(2+). Zn(2+) is bound at residue His389.

This sequence belongs to the histidinol dehydrogenase family. Zn(2+) serves as cofactor.

The catalysed reaction is L-histidinol + 2 NAD(+) + H2O = L-histidine + 2 NADH + 3 H(+). The protein operates within amino-acid biosynthesis; L-histidine biosynthesis; L-histidine from 5-phospho-alpha-D-ribose 1-diphosphate: step 9/9. Its function is as follows. Catalyzes the sequential NAD-dependent oxidations of L-histidinol to L-histidinaldehyde and then to L-histidine. This Saccharolobus solfataricus (strain ATCC 35092 / DSM 1617 / JCM 11322 / P2) (Sulfolobus solfataricus) protein is Histidinol dehydrogenase (hisD).